The following is a 90-amino-acid chain: Evasin P1126 (90 aa).

The signal sequence occupies residues 1–25; that stretch reads MTSHSAVRIAIFAVIALHSIFECLS. Intrachain disulfides connect Cys46–Cys62, Cys50–Cys64, and Cys58–Cys75. Asn55 is a glycosylation site (N-linked (GlcNAc...) asparagine). Asn77 is a glycosylation site (N-linked (GlcNAc...) asparagine).

It is found in the secreted. Its function is as follows. Salivary chemokine-binding protein which binds to host chemokines CXCL1, CXCL2, CXCL3, CXCL4, CXCL5, CXCL6, CXCL7, CXCL10 and CXCL11. This chain is Evasin P1126, found in Amblyomma cajennense (Cayenne tick).